The primary structure comprises 595 residues: NADH-quinone oxidoreductase subunit C/D (595 aa).

The interval 1-185 (MTDLTAQAAC…DPFELTKAKQ (185 aa)) is NADH dehydrogenase I subunit C. Positions 209 to 595 (DFMFLNLGPN…IDFVMSDVDR (387 aa)) are NADH dehydrogenase I subunit D.

The protein in the N-terminal section; belongs to the complex I 30 kDa subunit family. It in the C-terminal section; belongs to the complex I 49 kDa subunit family. As to quaternary structure, NDH-1 is composed of 13 different subunits. Subunits NuoB, CD, E, F, and G constitute the peripheral sector of the complex.

The protein localises to the cell inner membrane. It carries out the reaction a quinone + NADH + 5 H(+)(in) = a quinol + NAD(+) + 4 H(+)(out). Functionally, NDH-1 shuttles electrons from NADH, via FMN and iron-sulfur (Fe-S) centers, to quinones in the respiratory chain. The immediate electron acceptor for the enzyme in this species is believed to be ubiquinone. Couples the redox reaction to proton translocation (for every two electrons transferred, four hydrogen ions are translocated across the cytoplasmic membrane), and thus conserves the redox energy in a proton gradient. In Enterobacter sp. (strain 638), this protein is NADH-quinone oxidoreductase subunit C/D.